The primary structure comprises 288 residues: Hemin import ATP-binding protein HmuV (288 aa).

Positions 31 to 269 constitute an ABC transporter domain; that stretch reads LRARGLVVER…DLLTRVYQHP (239 aa). 68–75 contacts ATP; it reads GPNGAGKS.

Belongs to the ABC transporter superfamily. Heme (hemin) importer (TC 3.A.1.14.5) family. As to quaternary structure, the complex is composed of two ATP-binding proteins (HmuV), two transmembrane proteins (HmuU) and a solute-binding protein (HmuT).

It localises to the cell membrane. Its function is as follows. Part of the ABC transporter complex HmuTUV involved in hemin import. Responsible for energy coupling to the transport system. The polypeptide is Hemin import ATP-binding protein HmuV (Nocardia farcinica (strain IFM 10152)).